The sequence spans 204 residues: High frequency lysogenization protein HflD homolog (204 aa).

Belongs to the HflD family.

The protein localises to the cytoplasm. The protein resides in the cell inner membrane. This is High frequency lysogenization protein HflD homolog from Actinobacillus succinogenes (strain ATCC 55618 / DSM 22257 / CCUG 43843 / 130Z).